Here is a 497-residue protein sequence, read N- to C-terminus: Glycerol kinase (497 aa).

T13 is an ADP binding site. Positions 13, 14, and 15 each coordinate ATP. T13 serves as a coordination point for sn-glycerol 3-phosphate. R17 lines the ADP pocket. Residues R83, E84, and Y135 each coordinate sn-glycerol 3-phosphate. R83, E84, and Y135 together coordinate glycerol. Phosphohistidine; by HPr is present on H231. D245 provides a ligand contact to sn-glycerol 3-phosphate. 2 residues coordinate glycerol: D245 and Q246. 2 residues coordinate ADP: T267 and G310. The ATP site is built by T267, G310, Q314, and G411. ADP is bound by residues G411 and N415.

It belongs to the FGGY kinase family. In terms of assembly, homotetramer and homodimer (in equilibrium). Post-translationally, the phosphoenolpyruvate-dependent sugar phosphotransferase system (PTS), including enzyme I, and histidine-containing protein (HPr) are required for the phosphorylation, which leads to the activation of the enzyme.

The catalysed reaction is glycerol + ATP = sn-glycerol 3-phosphate + ADP + H(+). The protein operates within polyol metabolism; glycerol degradation via glycerol kinase pathway; sn-glycerol 3-phosphate from glycerol: step 1/1. With respect to regulation, activated by phosphorylation and inhibited by fructose 1,6-bisphosphate (FBP). Its function is as follows. Key enzyme in the regulation of glycerol uptake and metabolism. Catalyzes the phosphorylation of glycerol to yield sn-glycerol 3-phosphate. This chain is Glycerol kinase, found in Listeria monocytogenes serovar 1/2a (strain ATCC BAA-679 / EGD-e).